Here is a 404-residue protein sequence, read N- to C-terminus: Major outer membrane porin (404 aa).

A signal peptide spans 1–22; that stretch reads MKKLLKSVLAFAVLGSASSLHA. A disordered region spans residues 85-110; the sequence is GPVPTTTDTDAAADITTSTPRENPAY. A compositionally biased stretch (low complexity) spans 89–103; sequence TTTDTDAAADITTST.

This sequence belongs to the chlamydial porin (CP) (TC 1.B.2) family. In terms of assembly, part of a disulfide cross-linked outer membrane complex (COMC) composed of the major outer membrane porin (MOMP), the small cysteine-rich protein (OmcA) and the large cysteine-rich periplasmic protein (OmcB).

The protein localises to the cell outer membrane. In elementary bodies (EBs, the infectious stage, which is able to survive outside the host cell) provides the structural integrity of the outer envelope through disulfide cross-links with the small cysteine-rich protein and the large cysteine-rich periplasmic protein. It has been described in publications as the Sarkosyl-insoluble COMC (Chlamydia outer membrane complex), and serves as the functional equivalent of peptidoglycan. In terms of biological role, permits diffusion of specific solutes through the outer membrane. The sequence is that of Major outer membrane porin (ompA) from Chlamydia muridarum.